A 364-amino-acid polypeptide reads, in one-letter code: Fructose-bisphosphate aldolase, non-muscle type (364 aa).

Residues Arg56 and Lys147 each coordinate substrate. Lys230 functions as the Schiff-base intermediate with dihydroxyacetone-P in the catalytic mechanism.

The protein belongs to the class I fructose-bisphosphate aldolase family. In terms of assembly, homotetramer. In terms of tissue distribution, expressed mainly in the liver and also in brain and other tissues, except for the heart muscle.

The catalysed reaction is beta-D-fructose 1,6-bisphosphate = D-glyceraldehyde 3-phosphate + dihydroxyacetone phosphate. It participates in carbohydrate degradation; glycolysis; D-glyceraldehyde 3-phosphate and glycerone phosphate from D-glucose: step 4/4. The protein is Fructose-bisphosphate aldolase, non-muscle type of Lethenteron camtschaticum (Japanese lamprey).